A 258-amino-acid polypeptide reads, in one-letter code: Countin-1 (258 aa).

Positions 1–21 (MNKLFSLILALFLVNSAVVSS) are cleaved as a signal peptide. The Saposin B-type domain maps to 22–106 (LDSCSICVDF…EKISVCKTND (85 aa)). Disulfide bonds link Cys25–Cys102, Cys28–Cys96, and Cys56–Cys69. Residues Asn121 and Asn215 are each glycosylated (N-linked (GlcNAc...) asparagine). Residues 233–248 (AGSFSGSSQSTQTGAA) are compositionally biased toward low complexity. Residues 233-258 (AGSFSGSSQSTQTGAASGSGSGFALF) are disordered. The span at 249 to 258 (SGSGSGFALF) shows a compositional bias: gly residues.

It belongs to the countin family. Component of the counting factor (CF) complex, which includes cf60, cf50, cf45-1 and ctnA.

The protein localises to the secreted. In terms of biological role, cell-counting factor that limits the maximum size of the multicellular structure. May down-regulate the expression of gp24, which mediates cell adhesion. The polypeptide is Countin-1 (ctnA) (Dictyostelium discoideum (Social amoeba)).